A 385-amino-acid polypeptide reads, in one-letter code: Leucine aminopeptidase 1 (385 aa).

The N-terminal stretch at 1 to 19 (MKFPSFLSLGIAASTTALA) is a signal peptide. The propeptide occupies 20 to 87 (ALPDQKPIGD…FPRAFAKTAV (68 aa)). Asn-177 carries an N-linked (GlcNAc...) asparagine glycan. 2 residues coordinate Zn(2+): His-185 and Asp-204. Residue Asn-229 is glycosylated (N-linked (GlcNAc...) asparagine). Residues Glu-243 and Asp-270 each coordinate Zn(2+). Cys-319 and Cys-323 are oxidised to a cystine. His-352 contacts Zn(2+).

This sequence belongs to the peptidase M28 family. M28E subfamily. In terms of assembly, monomer. It depends on Zn(2+) as a cofactor.

It localises to the secreted. Its function is as follows. Extracellular aminopeptidase that allows assimilation of proteinaceous substrates. This is Leucine aminopeptidase 1 (LAP1) from Ajellomyces dermatitidis (strain ER-3 / ATCC MYA-2586) (Blastomyces dermatitidis).